The following is a 251-amino-acid chain: Malonyl-[acyl-carrier protein] O-methyltransferase (251 aa).

The protein belongs to the methyltransferase superfamily.

The enzyme catalyses malonyl-[ACP] + S-adenosyl-L-methionine = malonyl-[ACP] methyl ester + S-adenosyl-L-homocysteine. The protein operates within cofactor biosynthesis; biotin biosynthesis. In terms of biological role, converts the free carboxyl group of a malonyl-thioester to its methyl ester by transfer of a methyl group from S-adenosyl-L-methionine (SAM). It allows to synthesize pimeloyl-ACP via the fatty acid synthetic pathway. The polypeptide is Malonyl-[acyl-carrier protein] O-methyltransferase (Salmonella typhimurium (strain LT2 / SGSC1412 / ATCC 700720)).